The sequence spans 105 residues: Large ribosomal subunit protein uL24 (105 aa).

The protein belongs to the universal ribosomal protein uL24 family. As to quaternary structure, part of the 50S ribosomal subunit.

Functionally, one of two assembly initiator proteins, it binds directly to the 5'-end of the 23S rRNA, where it nucleates assembly of the 50S subunit. Its function is as follows. One of the proteins that surrounds the polypeptide exit tunnel on the outside of the subunit. The protein is Large ribosomal subunit protein uL24 of Saccharophagus degradans (strain 2-40 / ATCC 43961 / DSM 17024).